The chain runs to 235 residues: Lipoprotein-releasing system ATP-binding protein LolD 1 (235 aa).

In terms of domain architecture, ABC transporter spans 5–234; it reads FEARGITKSY…DGRLQLCTPL (230 aa). Residue 42 to 49 participates in ATP binding; sequence GASGSGKT.

This sequence belongs to the ABC transporter superfamily. Lipoprotein translocase (TC 3.A.1.125) family. In terms of assembly, the complex is composed of two ATP-binding proteins (LolD) and two transmembrane proteins (LolC and LolE).

It is found in the cell inner membrane. Its function is as follows. Part of the ABC transporter complex LolCDE involved in the translocation of mature outer membrane-directed lipoproteins, from the inner membrane to the periplasmic chaperone, LolA. Responsible for the formation of the LolA-lipoprotein complex in an ATP-dependent manner. The chain is Lipoprotein-releasing system ATP-binding protein LolD 1 from Chlorobium luteolum (strain DSM 273 / BCRC 81028 / 2530) (Pelodictyon luteolum).